Here is a 113-residue protein sequence, read N- to C-terminus: RING-box protein 2 (113 aa).

The tract at residues 1–26 (MADVEDGEETCALASHSGSSGSKSGG) is disordered. Position 2 is an N-acetylalanine (A2). Phosphothreonine; by CK2 is present on T10. Zn(2+) is bound by residues C50, C53, C61, C64, C73, C80, H82, H85, C87, C88, C99, and C102. An RING-type zinc finger spans residues 61–103 (CLRCQAENKQEDCVVVWGECNHSFHNCCMSLWVKQNNRCPLCQ).

Belongs to the RING-box family. As to quaternary structure, catalytic component of multiple cullin-5-RING E3 ubiquitin-protein ligase complexes (ECS complexes, also named CRL5 complexes) composed of CUL5, Elongin BC (ELOB and ELOC), RNF7/RBX2 and a variable SOCS box domain-containing protein as substrate-specific recognition component. Also interacts (with lower preference) with CUL1, CUL2, CUL3, CUL4A and CUL4B; additional evidence is however required to confirm this result in vivo. Interacts with UBE2F. Interacts with CSNK2B, the interaction is not affected by phosphorylation by CK2. May also interact with DCUN1D1, DCUN1D2, DCUN1D3, DCUN1D4 and DCUN1D5. (Microbial infection) Following infection by HIV-1 virus, component of a cullin-5-RING E3 ubiquitin-protein ligase complex (ECS complex) hijacked by the HIV-1 Vif protein. Phosphorylation at Thr-10 by CK2 promotes its degradation by the proteasome. As to expression, expressed in heart, liver, skeletal muscle and pancreas. At very low levels expressed in brain, placenta and lung.

It localises to the cytoplasm. The protein resides in the nucleus. It catalyses the reaction S-ubiquitinyl-[E2 ubiquitin-conjugating enzyme]-L-cysteine + [acceptor protein]-L-lysine = [E2 ubiquitin-conjugating enzyme]-L-cysteine + N(6)-ubiquitinyl-[acceptor protein]-L-lysine.. It carries out the reaction S-[NEDD8-protein]-yl-[E2 NEDD8-conjugating enzyme]-L-cysteine + [cullin]-L-lysine = [E2 NEDD8-conjugating enzyme]-L-cysteine + N(6)-[NEDD8-protein]-yl-[cullin]-L-lysine.. It functions in the pathway protein modification; protein ubiquitination. Its pathway is protein modification; protein neddylation. Its function is as follows. Catalytic component of multiple cullin-5-RING E3 ubiquitin-protein ligase complexes (ECS complexes), which mediate the ubiquitination and subsequent proteasomal degradation of target proteins. It is thereby involved in various biological processes, such as cell cycle progression, signal transduction and transcription. The functional specificity of the E3 ubiquitin-protein ligase ECS complexes depend on the variable SOCS box-containing substrate recognition component. Within ECS complexes, RNF7/RBX2 recruits the E2 ubiquitination enzyme to the complex via its RING-type and brings it into close proximity to the substrate. Catalytic subunit of various SOCS-containing ECS complexes, such as the ECS(SOCS7) complex, that regulate reelin signaling by mediating ubiquitination and degradation of DAB1. The ECS(SOCS2) complex mediates the ubiquitination and subsequent proteasomal degradation of phosphorylated EPOR and GHR. Promotes ubiquitination and degradation of NF1, thereby regulating Ras protein signal transduction. As part of the ECS(ASB9) complex, catalyzes ubiquitination and degradation of CKB. The ECS(SPSB3) complex catalyzes ubiquitination of nuclear CGAS. As part of the ECS(RAB40C) complex, mediates ANKRD28 ubiquitination and degradation, thereby inhibiting protein phosphatase 6 (PP6) complex activity and focal adhesion assembly during cell migration. As part of some ECS complex, catalyzes 'Lys-11'-linked ubiquitination and degradation of BTRC. ECS complexes and ARIH2 collaborate in tandem to mediate ubiquitination of target proteins; ARIH2 mediating addition of the first ubiquitin on CRLs targets. Specifically catalyzes the neddylation of CUL5 via its interaction with UBE2F. Does not catalyze neddylation of other cullins (CUL1, CUL2, CUL3, CUL4A or CUL4B). May play a role in protecting cells from apoptosis induced by redox agents. In terms of biological role, inactive. (Microbial infection) Following infection by HIV-1 virus, catalytic component of a cullin-5-RING E3 ubiquitin-protein ligase complex (ECS complex) hijacked by the HIV-1 Vif protein, which catalyzes ubiquitination and degradation of APOBEC3F and APOBEC3G. This is RING-box protein 2 from Homo sapiens (Human).